We begin with the raw amino-acid sequence, 640 residues long: Threonine--tRNA ligase (640 aa).

The 59-residue stretch at 1 to 59 (MKIKVKLPDGKEKEYDRGITPAEIAKELGVKKAIGAVVNGELWDLKRPIENDCELRLVT) folds into the TGS domain. A catalytic region spans residues 240 to 531 (DHRKLGPHLE…LIEHFAGAFP (292 aa)). 3 residues coordinate Zn(2+): C332, H383, and H508.

This sequence belongs to the class-II aminoacyl-tRNA synthetase family. As to quaternary structure, homodimer. Requires Zn(2+) as cofactor.

The protein resides in the cytoplasm. The enzyme catalyses tRNA(Thr) + L-threonine + ATP = L-threonyl-tRNA(Thr) + AMP + diphosphate + H(+). Functionally, catalyzes the attachment of threonine to tRNA(Thr) in a two-step reaction: L-threonine is first activated by ATP to form Thr-AMP and then transferred to the acceptor end of tRNA(Thr). Also edits incorrectly charged L-seryl-tRNA(Thr). This Thermotoga petrophila (strain ATCC BAA-488 / DSM 13995 / JCM 10881 / RKU-1) protein is Threonine--tRNA ligase.